Reading from the N-terminus, the 3159-residue chain is E1A-binding protein p400 (3159 aa).

The segment covering 1–16 (MHHGTGPQNVQHQLQR) has biased composition (polar residues). 7 disordered regions span residues 1-65 (MHHG…MNRS), 125-154 (SPLS…RAGA), 212-261 (PGTP…HITT), 282-359 (VLQG…PASP), 545-594 (LMPT…PQLP), 633-658 (QQPN…AQLA), and 684-770 (TRLP…SQDT). Over residues 31–41 (HPNPPPSPAAP) the composition is skewed to pro residues. Residues 42-55 (FAPSASPSAPQSPS) show a composition bias toward low complexity. Serine 53 carries the post-translational modification Phosphoserine. Over residues 56–65 (YQIQQLMNRS) the composition is skewed to polar residues. Composition is skewed to low complexity over residues 125–137 (SPLS…QSPT) and 237–256 (LGPQ…LASP). At serine 135 the chain carries Phosphoserine. 2 positions are modified to phosphoserine: serine 315 and serine 321. Positions 558 to 571 (QAAQLAGQRQSQQQ) are enriched in low complexity. A compositionally biased stretch (polar residues) spans 572–585 (YDPSTGPPVQNAAS). 2 stretches are compositionally biased toward pro residues: residues 637-653 (VPIP…PPSQ) and 689-698 (DPAPPCPRPL). Residues 699 to 711 (PTSSTSSLAPVSG) show a composition bias toward low complexity. 2 stretches are compositionally biased toward polar residues: residues 725–742 (NRPS…TSRT) and 751–760 (TKPQSPAQNA). Phosphoserine is present on residues serine 736 and serine 755. Residues 761–770 (TSSQDSSQDT) show a composition bias toward low complexity. The HSA domain maps to 799–871 (LPKLQEAPRP…EQSRLRRIAA (73 aa)). Disordered regions lie at residues 915–967 (ELRP…GVVD) and 997–1024 (SSQW…GDRE). A phosphoserine mark is found at serine 928 and serine 941. Phosphothreonine is present on threonine 945. Composition is skewed to acidic residues over residues 945 to 962 (TDDE…EEAN) and 1008 to 1019 (EDTSGEEDADDC). Positions 951–1365 (DEEETIEEEE…NVLSILVRLQ (415 aa)) are interactions with RUVBL1 and RUVBL2. A Phosphoserine modification is found at serine 1011. Positions 1103–1268 (AKLYRKNLNG…WTMVHFLVPG (166 aa)) constitute a Helicase ATP-binding domain. 1116–1123 (DEAGLGKT) is a binding site for ATP. A DEAH box-like motif is present at residues 1219 to 1222 (DEMQ). The segment at 1467-1582 (VQYGQKPEGR…QAPSHAAGQS (116 aa)) is disordered. The residue at position 1472 (lysine 1472) is an N6-acetyllysine. 2 stretches are compositionally biased toward low complexity: residues 1481–1498 (PSTH…SAAP) and 1538–1565 (PASA…ASTP). Phosphoserine is present on residues serine 1547, serine 1728, and serine 1732. Residues 1787 to 1807 (GSLDGRRGKEAGPAHSYTSSS) form a disordered region. The segment covering 1789 to 1798 (LDGRRGKEAG) has biased composition (basic and acidic residues). One can recognise a Helicase C-terminal domain in the interval 1899 to 2056 (KLEALAILLQ…GNDYSMAFLT (158 aa)). 2 disordered regions span residues 2119 to 2144 (KSAQ…PCDE) and 2287 to 2311 (KERK…GEAV). 2 positions are modified to N6-acetyllysine: lysine 2349 and lysine 2356. The Myb-like domain maps to 2360–2429 (EPGQDNPEWL…QCRNRYENVI (70 aa)). 2 disordered regions span residues 2524 to 2602 (KEKK…AQPA) and 2665 to 2688 (TPGG…GSPA). An interaction with ZNF42 region spans residues 2524–2789 (KEKKALADQQ…QQQQQTTTTS (266 aa)). Low complexity predominate over residues 2530 to 2540 (ADQQKAQQPAV). 2 stretches are compositionally biased toward pro residues: residues 2541 to 2563 (AQPP…PLPQ) and 2572 to 2589 (PAGP…PQTQ). The span at 2590-2602 (PQPVQAPAKAQPA) shows a compositional bias: low complexity. Residue serine 2686 is modified to Phosphoserine. Phosphothreonine is present on threonine 2813. Disordered regions lie at residues 2821 to 2869 (QKQK…TAPR) and 3115 to 3159 (APLQ…PPCQ). Over residues 2828–2843 (PPQPPPPQAQSAPPQP) the composition is skewed to pro residues. The segment covering 2844-2866 (TAQVQVQTSQPPQQQSPQLTTVT) has biased composition (low complexity). Over residues 3129 to 3140 (PASSDSPSQQPK) the composition is skewed to polar residues.

It belongs to the SNF2/RAD54 helicase family. SWR1 subfamily. As to quaternary structure, component of the NuA4 histone acetyltransferase complex which contains the catalytic subunit KAT5/TIP60 and the subunits EP400, TRRAP/PAF400, BRD8/SMAP, EPC1, DMAP1/DNMAP1, RUVBL1/TIP49, RUVBL2, ING3, actin, ACTL6A/BAF53A, MORF4L1/MRG15, MORF4L2/MRGX, MRGBP, YEATS4/GAS41, VPS72/YL1 and MEAF6. May also participate in the formation of NuA4 related complexes which lack the KAT5/TIP60 catalytic subunit, but which include the SWI/SNF related protein SRCAP. The NuA4 complex interacts with MYC and the adenovirus E1A protein. EP400 interacts with TRRAP, RUVBL1 and RUVBL2. Component of a SWR1-like complex. Interacts with ZNF42. Interacts with PHF5A. Interacts with human cytomegalovirus UL27. Interacts with human adenovirus 5 E1A protein; this interaction stabilizes MYC. As to expression, ubiquitously expressed.

The protein localises to the nucleus. Its function is as follows. Component of the NuA4 histone acetyltransferase complex which is involved in transcriptional activation of select genes principally by acetylation of nucleosomal histones H4 and H2A. This modification may both alter nucleosome - DNA interactions and promote interaction of the modified histones with other proteins which positively regulate transcription. May be required for transcriptional activation of E2F1 and MYC target genes during cellular proliferation. The NuA4 complex ATPase and helicase activities seem to be, at least in part, contributed by the association of RUVBL1 and RUVBL2 with EP400. May regulate ZNF42 transcription activity. Component of a SWR1-like complex that specifically mediates the removal of histone H2A.Z/H2AZ1 from the nucleosome. The polypeptide is E1A-binding protein p400 (EP400) (Homo sapiens (Human)).